Consider the following 272-residue polypeptide: L-aspartate dehydrogenase (272 aa).

A125 and N192 together coordinate NAD(+). H222 is an active-site residue.

The protein belongs to the L-aspartate dehydrogenase family.

The catalysed reaction is L-aspartate + NADP(+) + H2O = oxaloacetate + NH4(+) + NADPH + H(+). The enzyme catalyses L-aspartate + NAD(+) + H2O = oxaloacetate + NH4(+) + NADH + H(+). It participates in cofactor biosynthesis; NAD(+) biosynthesis; iminoaspartate from L-aspartate (dehydrogenase route): step 1/1. Functionally, specifically catalyzes the NAD or NADP-dependent dehydrogenation of L-aspartate to iminoaspartate. The sequence is that of L-aspartate dehydrogenase from Nitrosopumilus maritimus (strain SCM1).